Consider the following 453-residue polypeptide: Bifunctional protein GlmU (453 aa).

The segment at 1–226 is pyrophosphorylase; that stretch reads MKFSAVILAA…PIEVEGVNDR (226 aa). UDP-N-acetyl-alpha-D-glucosamine contacts are provided by residues 8–11, K22, Q73, 78–79, 100–102, G137, E151, N166, and N224; these read LAAG, GT, and YGD. D102 serves as a coordination point for Mg(2+). N224 serves as a coordination point for Mg(2+). The linker stretch occupies residues 227-247; sequence AQLARLERAFQAAQAKKLLEQ. The segment at 248 to 453 is N-acetyltransferase; the sequence is GVMLRDPARF…TGWQRPVKKK (206 aa). R330 and K348 together coordinate UDP-N-acetyl-alpha-D-glucosamine. The active-site Proton acceptor is H360. Residues Y363 and N374 each coordinate UDP-N-acetyl-alpha-D-glucosamine. Acetyl-CoA is bound by residues A377, 383-384, S402, A420, and R437; that span reads NY.

This sequence in the N-terminal section; belongs to the N-acetylglucosamine-1-phosphate uridyltransferase family. In the C-terminal section; belongs to the transferase hexapeptide repeat family. Homotrimer. It depends on Mg(2+) as a cofactor.

It is found in the cytoplasm. The catalysed reaction is alpha-D-glucosamine 1-phosphate + acetyl-CoA = N-acetyl-alpha-D-glucosamine 1-phosphate + CoA + H(+). It catalyses the reaction N-acetyl-alpha-D-glucosamine 1-phosphate + UTP + H(+) = UDP-N-acetyl-alpha-D-glucosamine + diphosphate. The protein operates within nucleotide-sugar biosynthesis; UDP-N-acetyl-alpha-D-glucosamine biosynthesis; N-acetyl-alpha-D-glucosamine 1-phosphate from alpha-D-glucosamine 6-phosphate (route II): step 2/2. It functions in the pathway nucleotide-sugar biosynthesis; UDP-N-acetyl-alpha-D-glucosamine biosynthesis; UDP-N-acetyl-alpha-D-glucosamine from N-acetyl-alpha-D-glucosamine 1-phosphate: step 1/1. Its pathway is bacterial outer membrane biogenesis; LPS lipid A biosynthesis. Catalyzes the last two sequential reactions in the de novo biosynthetic pathway for UDP-N-acetylglucosamine (UDP-GlcNAc). The C-terminal domain catalyzes the transfer of acetyl group from acetyl coenzyme A to glucosamine-1-phosphate (GlcN-1-P) to produce N-acetylglucosamine-1-phosphate (GlcNAc-1-P), which is converted into UDP-GlcNAc by the transfer of uridine 5-monophosphate (from uridine 5-triphosphate), a reaction catalyzed by the N-terminal domain. The chain is Bifunctional protein GlmU from Vibrio vulnificus (strain YJ016).